Consider the following 389-residue polypeptide: S-adenosylmethionine synthase (389 aa).

Histidine 15 provides a ligand contact to ATP. Aspartate 17 is a Mg(2+) binding site. K(+) is bound at residue glutamate 43. 2 residues coordinate L-methionine: glutamate 56 and glutamine 99. Residues 99 to 109 (QSPDIAQGVNE) form a flexible loop region. Residues 166–168 (DAK), 234–235 (RF), aspartate 243, 249–250 (RK), alanine 266, and lysine 270 each bind ATP. Aspartate 243 is a binding site for L-methionine. Position 274 (lysine 274) interacts with L-methionine.

Belongs to the AdoMet synthase family. As to quaternary structure, homotetramer; dimer of dimers. The cofactor is Mg(2+). K(+) serves as cofactor.

Its subcellular location is the cytoplasm. The enzyme catalyses L-methionine + ATP + H2O = S-adenosyl-L-methionine + phosphate + diphosphate. The protein operates within amino-acid biosynthesis; S-adenosyl-L-methionine biosynthesis; S-adenosyl-L-methionine from L-methionine: step 1/1. Functionally, catalyzes the formation of S-adenosylmethionine (AdoMet) from methionine and ATP. The overall synthetic reaction is composed of two sequential steps, AdoMet formation and the subsequent tripolyphosphate hydrolysis which occurs prior to release of AdoMet from the enzyme. In Neisseria gonorrhoeae (strain NCCP11945), this protein is S-adenosylmethionine synthase.